A 235-amino-acid polypeptide reads, in one-letter code: Segregation and condensation protein A (235 aa).

Belongs to the ScpA family. In terms of assembly, component of a cohesin-like complex composed of ScpA, ScpB and the Smc homodimer, in which ScpA and ScpB bind to the head domain of Smc. The presence of the three proteins is required for the association of the complex with DNA.

The protein resides in the cytoplasm. Participates in chromosomal partition during cell division. May act via the formation of a condensin-like complex containing Smc and ScpB that pull DNA away from mid-cell into both cell halves. The sequence is that of Segregation and condensation protein A from Streptococcus equi subsp. zooepidemicus (strain H70).